The following is a 117-amino-acid chain: Iron-sulfur cluster insertion protein ErpA (117 aa).

Cys-45, Cys-109, and Cys-111 together coordinate iron-sulfur cluster.

It belongs to the HesB/IscA family. Homodimer. It depends on iron-sulfur cluster as a cofactor.

Required for insertion of 4Fe-4S clusters for at least IspG. The chain is Iron-sulfur cluster insertion protein ErpA from Ruthia magnifica subsp. Calyptogena magnifica.